A 270-amino-acid polypeptide reads, in one-letter code: Tryptophan synthase alpha chain (270 aa).

Active-site proton acceptor residues include E49 and D60.

The protein belongs to the TrpA family. Tetramer of two alpha and two beta chains.

It carries out the reaction (1S,2R)-1-C-(indol-3-yl)glycerol 3-phosphate + L-serine = D-glyceraldehyde 3-phosphate + L-tryptophan + H2O. It participates in amino-acid biosynthesis; L-tryptophan biosynthesis; L-tryptophan from chorismate: step 5/5. Its function is as follows. The alpha subunit is responsible for the aldol cleavage of indoleglycerol phosphate to indole and glyceraldehyde 3-phosphate. The protein is Tryptophan synthase alpha chain of Pseudomonas syringae pv. tomato (strain ATCC BAA-871 / DC3000).